Consider the following 123-residue polypeptide: Small ribosomal subunit protein uS12 (123 aa).

3-methylthioaspartic acid is present on aspartate 89.

It belongs to the universal ribosomal protein uS12 family. Part of the 30S ribosomal subunit. Contacts proteins S8 and S17. May interact with IF1 in the 30S initiation complex.

Functionally, with S4 and S5 plays an important role in translational accuracy. Its function is as follows. Interacts with and stabilizes bases of the 16S rRNA that are involved in tRNA selection in the A site and with the mRNA backbone. Located at the interface of the 30S and 50S subunits, it traverses the body of the 30S subunit contacting proteins on the other side and probably holding the rRNA structure together. The combined cluster of proteins S8, S12 and S17 appears to hold together the shoulder and platform of the 30S subunit. This Myxococcus xanthus protein is Small ribosomal subunit protein uS12.